Consider the following 312-residue polypeptide: Nodulation protein D 2 (312 aa).

In terms of domain architecture, HTH lysR-type spans 6-63 (LDLNLLVALDALMTKRSVTAAARSINLSQPAMSAAIARLRTYFGDDLFTMRGRELIPT). Residues 23–42 (VTAAARSINLSQPAMSAAIA) constitute a DNA-binding region (H-T-H motif).

It belongs to the LysR transcriptional regulatory family.

Its function is as follows. Represses the expression of the nodABCIJ-nolO-noeI operon. This is Nodulation protein D 2 (nodD2) from Sinorhizobium fredii (strain NBRC 101917 / NGR234).